Reading from the N-terminus, the 159-residue chain is MDATFWAFIALVIFVAIVVYMKVPGMIGRTLDERADRIKKELEEARTLREEAQQLLAEYHRKRKEAEKEAGDIVASAEREAKALLEEAKRATEEYVARRNKLAEQKIATAETDAINAVRASAVDLAVAAAGSILAEKVDAKADGNLFNDALAQVKSHLN.

Residues Met1 to Met21 form a helical membrane-spanning segment.

The protein belongs to the ATPase B chain family. As to quaternary structure, F-type ATPases have 2 components, F(1) - the catalytic core - and F(0) - the membrane proton channel. F(1) has five subunits: alpha(3), beta(3), gamma(1), delta(1), epsilon(1). F(0) has three main subunits: a(1), b(2) and c(10-14). The alpha and beta chains form an alternating ring which encloses part of the gamma chain. F(1) is attached to F(0) by a central stalk formed by the gamma and epsilon chains, while a peripheral stalk is formed by the delta and b chains.

The protein localises to the cell inner membrane. Its function is as follows. F(1)F(0) ATP synthase produces ATP from ADP in the presence of a proton or sodium gradient. F-type ATPases consist of two structural domains, F(1) containing the extramembraneous catalytic core and F(0) containing the membrane proton channel, linked together by a central stalk and a peripheral stalk. During catalysis, ATP synthesis in the catalytic domain of F(1) is coupled via a rotary mechanism of the central stalk subunits to proton translocation. In terms of biological role, component of the F(0) channel, it forms part of the peripheral stalk, linking F(1) to F(0). The polypeptide is ATP synthase subunit b 2 (Brucella abortus (strain S19)).